The following is a 212-amino-acid chain: Cell division protein SepF (212 aa).

The interval 32 to 104 (RYADPDTSYD…APLGSDAHRE (73 aa)) is disordered. Positions 64–73 (EAEEDGGDYG) are enriched in acidic residues.

It belongs to the SepF family. In terms of assembly, homodimer. Interacts with FtsZ.

The protein resides in the cytoplasm. In terms of biological role, cell division protein that is part of the divisome complex and is recruited early to the Z-ring. Probably stimulates Z-ring formation, perhaps through the cross-linking of FtsZ protofilaments. Its function overlaps with FtsA. The chain is Cell division protein SepF from Saccharopolyspora erythraea (strain ATCC 11635 / DSM 40517 / JCM 4748 / NBRC 13426 / NCIMB 8594 / NRRL 2338).